We begin with the raw amino-acid sequence, 516 residues long: Lipid II flippase MurJ (516 aa).

Transmembrane regions (helical) follow at residues 93–113, 133–153, 159–179, 188–208, 233–253, 275–295, 317–337, 358–378, 390–409, 448–468, and 483–503; these read WALA…VFAV, IMFP…VLNT, LPAF…VFVA, ALAW…LPGL, VLAK…SLII, LMEF…LPSL, VTFL…TPLT, LATY…APGF, IAIG…VPLI, FFVQ…WCAI, and IALM…MLWV.

The protein belongs to the MurJ/MviN family.

The protein localises to the cell inner membrane. It participates in cell wall biogenesis; peptidoglycan biosynthesis. In terms of biological role, involved in peptidoglycan biosynthesis. Transports lipid-linked peptidoglycan precursors from the inner to the outer leaflet of the cytoplasmic membrane. This is Lipid II flippase MurJ from Burkholderia cenocepacia (strain ATCC BAA-245 / DSM 16553 / LMG 16656 / NCTC 13227 / J2315 / CF5610) (Burkholderia cepacia (strain J2315)).